Reading from the N-terminus, the 269-residue chain is Ribosomal RNA large subunit methyltransferase E (269 aa).

S-adenosyl-L-methionine contacts are provided by Gly58, Trp60, Asp78, Asp96, and Asp120. Lys160 (proton acceptor) is an active-site residue. Residues 234–269 (HEKKEGNETSDNDEDNNKNGLMIKKIKELRGKRSKL) form a disordered region. Basic and acidic residues predominate over residues 258 to 269 (KIKELRGKRSKL).

This sequence belongs to the class I-like SAM-binding methyltransferase superfamily. RNA methyltransferase RlmE family.

The protein localises to the cytoplasm. It carries out the reaction uridine(2552) in 23S rRNA + S-adenosyl-L-methionine = 2'-O-methyluridine(2552) in 23S rRNA + S-adenosyl-L-homocysteine + H(+). Its function is as follows. Specifically methylates the uridine in position 2552 of 23S rRNA at the 2'-O position of the ribose in the fully assembled 50S ribosomal subunit. The chain is Ribosomal RNA large subunit methyltransferase E from Methanococcus aeolicus (strain ATCC BAA-1280 / DSM 17508 / OCM 812 / Nankai-3).